Consider the following 421-residue polypeptide: Accessory Sec system protein translocase subunit SecY2 (421 aa).

10 helical membrane passes run 17 to 37, 69 to 89, 102 to 122, 139 to 159, 165 to 185, 204 to 224, 254 to 274, 299 to 319, 358 to 378, and 383 to 403; these read LWTS…IPGV, FALG…LTLI, TFLF…IAII, FGAM…LVWL, ILGI…NWPT, VILM…TVVV, PAGG…QYIL, PLGV…FAFI, SFVG…FGII, and TQYA…INII.

The protein belongs to the SecY/SEC61-alpha family. SecY2 subfamily. Component of the accessory SecA2/SecY2 protein translocase complex required to export cell wall proteins. May form heterotrimers with SecE and SecG subunits.

It localises to the cell membrane. Part of the accessory SecA2/SecY2 system specifically required for export of possible cell wall proteins. The central subunit of a protein translocation channel. The chain is Accessory Sec system protein translocase subunit SecY2 from Leuconostoc gelidum subsp. gasicomitatum (strain DSM 15947 / CCUG 46042 / CECT 5767 / JCM 12535 / LMG 18811 / NBRC 113245 / TB1-10) (Leuconostoc gasicomitatum).